The sequence spans 517 residues: Crotonobetaine/carnitine--CoA ligase (517 aa).

This sequence belongs to the ATP-dependent AMP-binding enzyme family.

It carries out the reaction 4-(trimethylamino)butanoate + ATP + CoA = 4-(trimethylamino)butanoyl-CoA + AMP + diphosphate. The enzyme catalyses crotonobetaine + ATP + CoA = crotonobetainyl-CoA + AMP + diphosphate. It catalyses the reaction (R)-carnitine + ATP + CoA = (R)-carnitinyl-CoA + AMP + diphosphate. The protein operates within amine and polyamine metabolism; carnitine metabolism. Catalyzes the transfer of CoA to carnitine, generating the initial carnitinyl-CoA needed for the CaiB reaction cycle. Also has activity toward crotonobetaine and gamma-butyrobetaine. This Escherichia coli O9:H4 (strain HS) protein is Crotonobetaine/carnitine--CoA ligase.